The following is a 197-amino-acid chain: Peptide deformylase (197 aa).

Fe cation is bound by residues C106 and H148. E149 is a catalytic residue. H152 is a binding site for Fe cation.

It belongs to the polypeptide deformylase family. It depends on Fe(2+) as a cofactor.

It carries out the reaction N-terminal N-formyl-L-methionyl-[peptide] + H2O = N-terminal L-methionyl-[peptide] + formate. Its function is as follows. Removes the formyl group from the N-terminal Met of newly synthesized proteins. Requires at least a dipeptide for an efficient rate of reaction. N-terminal L-methionine is a prerequisite for activity but the enzyme has broad specificity at other positions. The sequence is that of Peptide deformylase from Mycolicibacterium paratuberculosis (strain ATCC BAA-968 / K-10) (Mycobacterium paratuberculosis).